The chain runs to 424 residues: MNNEILTLQVGKTGILTGNEFWKSLVREKNLLSDFSLGKNSPTNDNVFFEESNESFFIPRTIIFDLSERDFNYIMKSNYSKMYDKNRHFILNKNTGNSWLKGYYEGISNCNLVDNILRKRIEKMNSVKYFNVFNSINGGTGAGLSSYLIEYIRNNYPKSFINCCSIFPDLYGNTQVTFQPYNSVLSIAWQGLYCDSNIFFQNHAIENLLTKNQINNELSFRKVNYIIGKTISIIMNTLNHNFTLETLISPLIVNPYLNLFFSTINIDILLSKLRKKRPSMIENKTNQLNEISMNLDLKSGNYLSSIELSNRNFYKLFANSIYDKIFYDQTRFYSQLLNQYDSVIINNNVKKENYSSLTYLLNHTSFNPVIKKIIQNFELLKKRNAFLEYYCGEILLDEANTLFRESKDYILDIINNYDNILSYY.

137 to 143 (NGGTGAG) lines the GTP pocket.

This sequence belongs to the tubulin family.

Functionally, tubulin is the major constituent of microtubules. The gamma chain is found at microtubule organizing centers (MTOC) such as the spindle poles or the centrosome, suggesting that it is involved in the minus-end nucleation of microtubule assembly. This chain is Tubulin gamma chain, nucleomorph (tubG), found in Guillardia theta (Cryptophyte).